A 445-amino-acid chain; its full sequence is MSHSDQTSPLEARKSAALSGTARVPGDKSISHRALILGALAVGETRISGLLEGQDVIDTGKAMRALGARVERTGEFAWTVRGVGVAGFAQPEAPLDFGNSGTGCRLAMGAVAGSPITATFDGDASLRSRPMRRIVDPLEQMGARVIQSHEGGRLPLTLQGARDPLPITYRTPVPSAQIKSAVLLAGLSAPGVTTVIEAEASRDHTELMLQHFGATLVTEPEGAHGRKISLTGQPELRGARVVVPADPSSAAFPMVAALLVPGSDIVLTEVMTNPLRTGLITTLREMGGAIEESETRDDTGEPMAQFRIRGSRLRGVEVPPERAPSMIDEYLVLAVAAAFAEGTTVMRGLHELRVKESDRLEATADMLRVNGVKVEIVGDDLIVEGKGHVPGGGLVATHMDHRIAMSALVMGLAADRPVKVDDTAFIATSFPDFVPMMRRLGGELA.

Residues 1 to 25 (MSHSDQTSPLEARKSAALSGTARVP) are disordered. 3-phosphoshikimate is bound by residues Lys28, Ser29, and Arg33. Lys28 serves as a coordination point for phosphoenolpyruvate. Phosphoenolpyruvate-binding residues include Gly101 and Arg129. Residues Ser175, Gln177, Asp328, and Lys355 each coordinate 3-phosphoshikimate. Gln177 provides a ligand contact to phosphoenolpyruvate. Asp328 (proton acceptor) is an active-site residue. Phosphoenolpyruvate contacts are provided by Arg359 and Arg402.

It belongs to the EPSP synthase family. Monomer.

The protein localises to the cytoplasm. The enzyme catalyses 3-phosphoshikimate + phosphoenolpyruvate = 5-O-(1-carboxyvinyl)-3-phosphoshikimate + phosphate. The protein operates within metabolic intermediate biosynthesis; chorismate biosynthesis; chorismate from D-erythrose 4-phosphate and phosphoenolpyruvate: step 6/7. Its function is as follows. Catalyzes the transfer of the enolpyruvyl moiety of phosphoenolpyruvate (PEP) to the 5-hydroxyl of shikimate-3-phosphate (S3P) to produce enolpyruvyl shikimate-3-phosphate and inorganic phosphate. The sequence is that of 3-phosphoshikimate 1-carboxyvinyltransferase from Rhodopseudomonas palustris (strain BisB5).